We begin with the raw amino-acid sequence, 443 residues long: Phosphoglucosamine mutase (443 aa).

Catalysis depends on Ser-102, which acts as the Phosphoserine intermediate. 4 residues coordinate Mg(2+): Ser-102, Asp-241, Asp-243, and Asp-245. Phosphoserine is present on Ser-102.

Belongs to the phosphohexose mutase family. Requires Mg(2+) as cofactor. Post-translationally, activated by phosphorylation.

The catalysed reaction is alpha-D-glucosamine 1-phosphate = D-glucosamine 6-phosphate. Catalyzes the conversion of glucosamine-6-phosphate to glucosamine-1-phosphate. This chain is Phosphoglucosamine mutase, found in Acinetobacter baylyi (strain ATCC 33305 / BD413 / ADP1).